Consider the following 600-residue polypeptide: tRNA uridine 5-carboxymethylaminomethyl modification enzyme MnmG (600 aa).

An FAD-binding site is contributed by 10–15 (GGGHAG). The tract at residues 216 to 239 (ADPQPRGFTGTPGPRAAESPTWQT) is disordered. 267–281 (GPRYCPSIEDKVVKF) provides a ligand contact to NAD(+).

This sequence belongs to the MnmG family. As to quaternary structure, homodimer. Heterotetramer of two MnmE and two MnmG subunits. FAD serves as cofactor.

It localises to the cytoplasm. Its function is as follows. NAD-binding protein involved in the addition of a carboxymethylaminomethyl (cmnm) group at the wobble position (U34) of certain tRNAs, forming tRNA-cmnm(5)s(2)U34. This Deinococcus radiodurans (strain ATCC 13939 / DSM 20539 / JCM 16871 / CCUG 27074 / LMG 4051 / NBRC 15346 / NCIMB 9279 / VKM B-1422 / R1) protein is tRNA uridine 5-carboxymethylaminomethyl modification enzyme MnmG.